The following is a 117-amino-acid chain: Cell division protein FtsB (117 aa).

Over 1-6 (MRDWRW) the chain is Cytoplasmic. A helical membrane pass occupies residues 7–24 (MLLVLALLLGWLQYRFWF). The Periplasmic segment spans residues 25–117 (GPGNSGEVMM…QVGDHPADVP (93 aa)). Positions 29-69 (SGEVMMLEAQVANQERDNEGLQQRNDALAAEVKDLKEGQSA) form a coiled coil.

The protein belongs to the FtsB family. Part of a complex composed of FtsB, FtsL and FtsQ.

It localises to the cell inner membrane. Essential cell division protein. May link together the upstream cell division proteins, which are predominantly cytoplasmic, with the downstream cell division proteins, which are predominantly periplasmic. This chain is Cell division protein FtsB, found in Stenotrophomonas maltophilia (strain K279a).